The primary structure comprises 636 residues: DNA mismatch repair protein MutL (636 aa).

A compositionally biased stretch (basic and acidic residues) spans 332 to 344 (HAGEQGDSLRTDI). Disordered stretches follow at residues 332–360 (HAGEQGDSLRTDIADAPEQPGATATPADN) and 417–443 (ASAPADAAPAQASEPAAAPQADDSDDA). The span at 417–437 (ASAPADAAPAQASEPAAAPQA) shows a compositional bias: low complexity.

Belongs to the DNA mismatch repair MutL/HexB family.

Functionally, this protein is involved in the repair of mismatches in DNA. It is required for dam-dependent methyl-directed DNA mismatch repair. May act as a 'molecular matchmaker', a protein that promotes the formation of a stable complex between two or more DNA-binding proteins in an ATP-dependent manner without itself being part of a final effector complex. The sequence is that of DNA mismatch repair protein MutL from Ralstonia nicotianae (strain ATCC BAA-1114 / GMI1000) (Ralstonia solanacearum).